The chain runs to 109 residues: Large ribosomal subunit protein uL24 (109 aa).

It belongs to the universal ribosomal protein uL24 family. Part of the 50S ribosomal subunit.

One of two assembly initiator proteins, it binds directly to the 5'-end of the 23S rRNA, where it nucleates assembly of the 50S subunit. Functionally, one of the proteins that surrounds the polypeptide exit tunnel on the outside of the subunit. The sequence is that of Large ribosomal subunit protein uL24 from Hamiltonella defensa subsp. Acyrthosiphon pisum (strain 5AT).